Consider the following 225-residue polypeptide: NAD(P)H-quinone oxidoreductase subunit K, chloroplastic (225 aa).

Residues C43, C44, C108, and C139 each coordinate [4Fe-4S] cluster.

This sequence belongs to the complex I 20 kDa subunit family. NDH is composed of at least 16 different subunits, 5 of which are encoded in the nucleus. It depends on [4Fe-4S] cluster as a cofactor.

Its subcellular location is the plastid. It localises to the chloroplast thylakoid membrane. The catalysed reaction is a plastoquinone + NADH + (n+1) H(+)(in) = a plastoquinol + NAD(+) + n H(+)(out). The enzyme catalyses a plastoquinone + NADPH + (n+1) H(+)(in) = a plastoquinol + NADP(+) + n H(+)(out). Its function is as follows. NDH shuttles electrons from NAD(P)H:plastoquinone, via FMN and iron-sulfur (Fe-S) centers, to quinones in the photosynthetic chain and possibly in a chloroplast respiratory chain. The immediate electron acceptor for the enzyme in this species is believed to be plastoquinone. Couples the redox reaction to proton translocation, and thus conserves the redox energy in a proton gradient. This Gossypium barbadense (Sea Island cotton) protein is NAD(P)H-quinone oxidoreductase subunit K, chloroplastic.